Reading from the N-terminus, the 515-residue chain is Maturase K (515 aa).

This sequence belongs to the intron maturase 2 family. MatK subfamily.

It is found in the plastid. The protein resides in the chloroplast. Its function is as follows. Usually encoded in the trnK tRNA gene intron. Probably assists in splicing its own and other chloroplast group II introns. This is Maturase K from Picea pungens (Colorado spruce).